Here is a 104-residue protein sequence, read N- to C-terminus: L-rhamnose mutarotase (104 aa).

Tyr-18 is a binding site for substrate. Residue His-22 is the Proton donor of the active site. Substrate-binding positions include Tyr-41 and 76–77 (WW).

The protein belongs to the rhamnose mutarotase family. Homodimer.

Its subcellular location is the cytoplasm. It carries out the reaction alpha-L-rhamnose = beta-L-rhamnose. Its pathway is carbohydrate metabolism; L-rhamnose metabolism. Involved in the anomeric conversion of L-rhamnose. In Burkholderia ambifaria (strain MC40-6), this protein is L-rhamnose mutarotase.